Here is a 218-residue protein sequence, read N- to C-terminus: Transcription initiation factor TFIID subunit 10 (218 aa).

Low complexity-rich tracts occupy residues 1-21 (MSCS…ASAP) and 29-39 (APAALPSSTAA). The segment at 1-85 (MSCSGSGADP…GAAPVSAGGA (85 aa)) is disordered. N-acetylserine is present on Ser2. Position 44 is a phosphoserine (Ser44). Thr48 carries the phosphothreonine modification. Positions 48–62 (TAGGPGAGAAAGGTG) are enriched in gly residues. Positions 187–189 (KSK) match the [KR]-[STA]-K motif motif. Lys189 is subject to Allysine; alternate. Lys189 bears the N6,N6,N6-trimethyllysine; alternate mark.

Belongs to the TAF10 family. Component of the TFIID basal transcription factor complex, composed of TATA-box-binding protein TBP, and a number of TBP-associated factors (TAFs), including TAF1, TAF2, TAF3, TAF4, TAF5, TAF6, TAF7, TAF8, TAF9, TAF10, TAF11, TAF12 and TAF13. Component of the TATA-binding protein-free TAF complex (TFTC), the PCAF histone acetylase complex and the STAGA transcription coactivator-HAT complex. The PCAF complex consists at least of TADA2L/ADA2, TADA3L/ADA3, SUPT3H, TAF5L TAF6L, TAF9, TAF10, TAF12 and TRRAP. The TFTC-HAT complex consists at least of TAF5L, TAF6L, TADA3L, SUPT3H, TAF2, TAF4, TAF5, GCN5L2/GCN5, TAF10 and TRRAP. The STAGA transcription coactivator-HAT complex consists at least of SUPT3H, GCN5L2, TAF5L, TAF6L, SUPT7L, TADA3L, TAD1L, TAF10, TAF12, TRRAP and TAF9. The STAGA core complex is associated with a subcomplex required for histone deubiquitination composed of ATXN7L3, ENY2 and USP22. Interacts with TAF3. Interacts with LOXL2. Interacts with TAF12 isoform TAFII20; the interaction is direct. Monomethylated at Lys-189 by SETD7, leading to increased affinity for RNA polymerase II. Post-translationally, lysine deamination at Lys-189 to form allysine is mediated by LOXL2. Allysine formation by LOXL2 results in release of TAF10 from promoters, leading to inhibition of TFIID-dependent transcription.

The protein localises to the nucleus. In terms of biological role, the TFIID basal transcription factor complex plays a major role in the initiation of RNA polymerase II (Pol II)-dependent transcription. TFIID recognizes and binds promoters with or without a TATA box via its subunit TBP, a TATA-box-binding protein, and promotes assembly of the pre-initiation complex (PIC). The TFIID complex consists of TBP and TBP-associated factors (TAFs), including TAF1, TAF2, TAF3, TAF4, TAF5, TAF6, TAF7, TAF8, TAF9, TAF10, TAF11, TAF12 and TAF13. TAF10 is also component of the PCAF histone acetylase complex, the TATA-binding protein-free TAF complex (TFTC) and the STAGA transcription coactivator-HAT complex. May regulate cyclin E expression. The polypeptide is Transcription initiation factor TFIID subunit 10 (TAF10) (Homo sapiens (Human)).